The primary structure comprises 287 residues: Serine/arginine-rich SC35-like splicing factor SCL33 (287 aa).

The disordered stretch occupies residues 1-34; sequence MRGRSYTPSPPRGYGRRGRSPSPRGRYGGRSRDL. A phosphoserine mark is found at serine 9 and serine 20. The 79-residue stretch at 36–114 folds into the RRM domain; that stretch reads TSLLVRNLRH…RELTVVFAEE (79 aa). The span at 116–132 shows a compositional bias: basic and acidic residues; that stretch reads RKKPTEMRARERGGGRF. A disordered region spans residues 116 to 287; that stretch reads RKKPTEMRAR…QYDEDRSPSQ (172 aa). Residues serine 165, serine 175, serine 177, serine 188, and serine 190 each carry the phosphoserine modification. Residues 177–187 are compositionally biased toward basic and acidic residues; it reads SPREERYDGRR. A compositionally biased stretch (basic residues) spans 220–237; sequence SISRSPRRSRSPSPKRNR. Phosphoserine is present on residues serine 238, serine 248, serine 271, serine 284, and serine 286. A compositionally biased stretch (basic residues) spans 244 to 260; it reads SISRSPRRSRSPRRSRR. Residues 278–287 are compositionally biased toward basic and acidic residues; sequence QYDEDRSPSQ.

This sequence belongs to the splicing factor SR family. SCL subfamily. Component of the spliceosome. Homodimer. Interacts with AFC2, CYP59, RS2Z33, RNU1 and SR45. The interaction with AFC2 depends on phosphorylation status. Post-translationally, phosphorylated by AFC2. As to expression, ubiquitous. Mostly expressed in roots, fruits and flowers, and, to a lower extent, in leaves.

The protein localises to the nucleus speckle. It is found in the nucleus. It localises to the nucleoplasm. The protein resides in the cytoplasm. Its function is as follows. Involved in intron recognition and spliceosome assembly. Binds to multiple 5'-GAAG-3' repeats found in its third intron, suggesting autoregulation of alternative splicing. May be necessary for accurate splicing of the 3' region of introns. This is Serine/arginine-rich SC35-like splicing factor SCL33 (SCL33) from Arabidopsis thaliana (Mouse-ear cress).